A 632-amino-acid polypeptide reads, in one-letter code: tRNA uridine 5-carboxymethylaminomethyl modification enzyme MnmG (632 aa).

FAD is bound by residues 15–20, Ile127, and Ser182; that span reads GAGHAG. 276–290 lines the NAD(+) pocket; the sequence is GPRYCPSIEDKIVRF. Gln373 provides a ligand contact to FAD.

The protein belongs to the MnmG family. As to quaternary structure, homodimer. Heterotetramer of two MnmE and two MnmG subunits. The cofactor is FAD.

Its subcellular location is the cytoplasm. Its function is as follows. NAD-binding protein involved in the addition of a carboxymethylaminomethyl (cmnm) group at the wobble position (U34) of certain tRNAs, forming tRNA-cmnm(5)s(2)U34. The protein is tRNA uridine 5-carboxymethylaminomethyl modification enzyme MnmG of Streptococcus pyogenes serotype M1.